A 271-amino-acid polypeptide reads, in one-letter code: Vacuolar arginine/histidine antiporter stm1 (271 aa).

Positions 14–80 (LTELSSFLGA…GNVSSTVLVL (67 aa)) constitute a PQ-loop 1 domain. The next 3 membrane-spanning stretches (helical) occupy residues 17 to 37 (LSSF…IPQL), 49 to 69 (ISDL…LGSI), and 77 to 97 (VLVL…QIYY). Serine 119 carries the post-translational modification Phosphoserine. 4 consecutive transmembrane segments (helical) span residues 144–164 (FGVM…IISS), 178–198 (PFTA…PQII), 211–231 (IIFF…ILVF), and 245–265 (PWIL…YQFI). A PQ-loop 2 domain is found at 185-239 (SSVLYFCARIPQIIKNHKAKSTEGLSIIFFVLASVGNTSYAFSILVFPASDYLNY).

It belongs to the laat-1 family.

It is found in the vacuole membrane. It catalyses the reaction L-histidine(out) + L-arginine(in) = L-histidine(in) + L-arginine(out). In terms of biological role, amino acid transporter that moves basic amino acids across the vacuolar membrane. Appears to function as an arginine/histidine antiporter. This Schizosaccharomyces pombe (strain 972 / ATCC 24843) (Fission yeast) protein is Vacuolar arginine/histidine antiporter stm1 (stm1).